The chain runs to 728 residues: Polyribonucleotide nucleotidyltransferase (728 aa).

Positions 488 and 494 each coordinate Mg(2+). The KH domain occupies 555 to 614 (PRMITMKIHPDKIREVIGKGGSTIQALTKETGTTIDIQEDGTITIASTSTDGMAEAKRRI). The region spanning 624-692 (GKIYNGTVLK…EKGRLRLSLK (69 aa)) is the S1 motif domain. Residues 702-728 (ISPVNAGEAAPAPAPAAAPATPSDQQQ) form a disordered region. Low complexity predominate over residues 710–721 (AAPAPAPAAAPA).

The protein belongs to the polyribonucleotide nucleotidyltransferase family. The cofactor is Mg(2+).

The protein localises to the cytoplasm. The enzyme catalyses RNA(n+1) + phosphate = RNA(n) + a ribonucleoside 5'-diphosphate. Functionally, involved in mRNA degradation. Catalyzes the phosphorolysis of single-stranded polyribonucleotides processively in the 3'- to 5'-direction. The sequence is that of Polyribonucleotide nucleotidyltransferase from Cupriavidus pinatubonensis (strain JMP 134 / LMG 1197) (Cupriavidus necator (strain JMP 134)).